The chain runs to 247 residues: DNA polymerase sliding clamp 1 (247 aa).

It belongs to the PCNA family. Heterotrimer. The subunits circularize to form a toroid; DNA passes through its center. Replication factor C (RFC) is required to load the toroid on the DNA.

Sliding clamp subunit that acts as a moving platform for DNA processing. Responsible for tethering the catalytic subunit of DNA polymerase and other proteins to DNA during high-speed replication. This is DNA polymerase sliding clamp 1 from Aeropyrum pernix (strain ATCC 700893 / DSM 11879 / JCM 9820 / NBRC 100138 / K1).